The primary structure comprises 615 residues: Peptidoglycan-binding protein YepA (615 aa).

The first 26 residues, 1–26 (MRNLAALLPALFLLGSSLLPAGTALA), serve as a signal peptide directing secretion.

This sequence belongs to the bacterial solute-binding protein 5 family. In terms of assembly, the complex is composed of one ATP-binding protein (YejF), two transmembrane proteins (YejB and YejE) and a solute-binding protein (YepA).

The protein localises to the periplasm. Part of the ABC transporter complex YejBEF-YepA involved in the uptake of muropeptides, the breakdown products of cell wall peptidoglycan. The import of muropeptides into the cell enables peptidoglycan recycling, which is vital for cell wall integrity in this bacterium. Probably binds muropeptides. The sequence is that of Peptidoglycan-binding protein YepA from Agrobacterium fabrum (strain C58 / ATCC 33970) (Agrobacterium tumefaciens (strain C58)).